The sequence spans 636 residues: Chaperone protein HtpG (636 aa).

The a; substrate-binding stretch occupies residues 1–349 (MAKHQFQTEV…SEDLPLNVSR (349 aa)). The interval 350 to 562 (EILQENRILA…ADAQMAAMAH (213 aa)) is b. The interval 563–636 (MFRAMGQAMP…RLSRITAKAL (74 aa)) is c.

Belongs to the heat shock protein 90 family. As to quaternary structure, homodimer.

Its subcellular location is the cytoplasm. Functionally, molecular chaperone. Has ATPase activity. This is Chaperone protein HtpG from Aliarcobacter butzleri (strain RM4018) (Arcobacter butzleri).